We begin with the raw amino-acid sequence, 545 residues long: Reticulon-2 (545 aa).

Disordered regions lie at residues 1 to 183 (MGQV…ETGE) and 199 to 250 (SPEV…EREP). The span at 14-25 (APSTASSTPDST) shows a compositional bias: low complexity. Residues 32 to 43 (SDFRELHTAREF) show a composition bias toward basic and acidic residues. Ser44 bears the Phosphoserine mark. Over residues 135-146 (RPLEDLRLRLDH) the composition is skewed to basic and acidic residues. Over residues 157–166 (GEDSSTSSST) the composition is skewed to low complexity. Residues 199–230 (SPEVLTPQLSPGSGTPQAGTPSPSRSRDSNSG) are compositionally biased toward polar residues. Residues Ser227 and Ser229 each carry the phosphoserine modification. The 201-residue stretch at 345–545 (VADLLYWKDT…AVSGSKAKAE (201 aa)) folds into the Reticulon domain. Helical transmembrane passes span 368–388 (LLCLLHFSIVSVAAHLALLLL) and 463–483 (LLFYILTFVGAIFNGLTLLIL).

In terms of assembly, interacts with isoform 1 but not isoform 3 of SPAST. Interacts with BACE1. Interacts (via first transmembrane domain) with ARL6IP5/GTRAP3-18. Interacts (via N-terminus) with SLC1A1/EAAC1; the interaction promotes cell surface expression of SLC1A1. Interacts with TMEM33. As to expression, highly expressed in skeletal muscle.

The protein localises to the endoplasmic reticulum membrane. The protein resides in the sarcoplasmic reticulum membrane. It is found in the cell membrane. Its subcellular location is the sarcolemma. It localises to the T-tubule. The protein localises to the cytoplasm. The protein resides in the myofibril. It is found in the sarcomere. Its subcellular location is the z line. It localises to the cytoskeleton. Functionally, inhibits amyloid precursor protein processing, probably by blocking BACE1 activity. Enhances trafficking of the glutamate transporter SLC1A1/EAAC1 from the endoplasmic reticulum to the cell surface. Plays a role in the translocation of SLC2A4/GLUT4 from intracellular membranes to the cell membrane which facilitates the uptake of glucose into the cell. The sequence is that of Reticulon-2 (RTN2) from Homo sapiens (Human).